The sequence spans 327 residues: Aquaporin-1 (327 aa).

The disordered stretch occupies residues 1-34; that stretch reads MSSNDSNDTDKQHTRLDPTGVDDAYIPPEQPETK. Residues 1–48 are Cytoplasmic-facing; sequence MSSNDSNDTDKQHTRLDPTGVDDAYIPPEQPETKHHRFKISKDTLRNH. Residues 49–69 traverse the membrane as a helical segment; the sequence is FIAAAGEFCGTFMFLWCAYVI. Over 70-91 the chain is Extracellular; that stretch reads CNVANHDVALVAAPDGSHPGQL. A helical transmembrane segment spans residues 92–112; it reads IMIAIGFGFSVMFSIWCFAGV. Topologically, residues 113–136 are cytoplasmic; that stretch reads SGGALNPAVSLSLCLARAVSPTRC. Residues 118–120 carry the NPA 1 motif; sequence NPA. Residues 137–157 form a helical membrane-spanning segment; sequence VVMWVSQIVAGMAAGGAASAM. Topologically, residues 158–176 are extracellular; it reads TPGEVLFANSLGLGCSRTR. The chain crosses the membrane as a helical span at residues 177-197; it reads GLFLEMFGTAILCLTVLMTAV. Over 198–203 the chain is Cytoplasmic; the sequence is EKRETN. A helical transmembrane segment spans residues 204–224; it reads FMAALPIGISLFIAHVALTAY. Topologically, residues 225–248 are extracellular; it reads TGTGVNPARSLGAAVAARYFPHYH. The short motif at 230-232 is the NPA 2 element; that stretch reads NPA. Residues 249–269 form a helical membrane-spanning segment; the sequence is WIYWIGPLLGSILAWSVWQLL. At 270-327 the chain is on the cytoplasmic side; it reads QILDYTTYVTAEKAASTKEKAQKKVKPAVPLLWLKSNFSLLFFISRSLALNVIIFGKN.

This sequence belongs to the MIP/aquaporin (TC 1.A.8) family.

Its subcellular location is the endoplasmic reticulum membrane. The protein resides in the cell membrane. Functionally, water channel required to facilitate the transport of water across membranes. Involved in sporulation, freeze tolerance and osmotolerance. Is non-functional in most laboratory strains. The polypeptide is Aquaporin-1 (AQY1) (Saccharomyces cerevisiae (strain Lalvin EC1118 / Prise de mousse) (Baker's yeast)).